The primary structure comprises 59 residues: Large ribosomal subunit protein uL30 (59 aa).

Belongs to the universal ribosomal protein uL30 family. In terms of assembly, part of the 50S ribosomal subunit.

The sequence is that of Large ribosomal subunit protein uL30 from Aliivibrio fischeri (strain MJ11) (Vibrio fischeri).